The following is a 352-amino-acid chain: Histidine biosynthesis bifunctional protein HisB (352 aa).

The interval 1–164 (MSQKILFIDR…EIENEILSSF (164 aa)) is histidinol-phosphatase. The active-site Nucleophile is the D9. Residues D9 and D11 each contribute to the Mg(2+) site. The Proton donor role is filled by D11. 4 residues coordinate Zn(2+): C93, H95, C101, and C103. D130 contacts Mg(2+). The imidazoleglycerol-phosphate dehydratase stretch occupies residues 165–352 (RSASYQRTTK…ENLASSKGVI (188 aa)).

In the N-terminal section; belongs to the histidinol-phosphatase family. It in the C-terminal section; belongs to the imidazoleglycerol-phosphate dehydratase family. Requires Mg(2+) as cofactor. Zn(2+) serves as cofactor.

The protein resides in the cytoplasm. It catalyses the reaction D-erythro-1-(imidazol-4-yl)glycerol 3-phosphate = 3-(imidazol-4-yl)-2-oxopropyl phosphate + H2O. It carries out the reaction L-histidinol phosphate + H2O = L-histidinol + phosphate. It participates in amino-acid biosynthesis; L-histidine biosynthesis; L-histidine from 5-phospho-alpha-D-ribose 1-diphosphate: step 6/9. Its pathway is amino-acid biosynthesis; L-histidine biosynthesis; L-histidine from 5-phospho-alpha-D-ribose 1-diphosphate: step 8/9. The protein is Histidine biosynthesis bifunctional protein HisB of Campylobacter jejuni subsp. jejuni serotype O:2 (strain ATCC 700819 / NCTC 11168).